A 417-amino-acid polypeptide reads, in one-letter code: Serine hydroxymethyltransferase (417 aa).

Residues leucine 121 and 125–127 (GHL) each bind (6S)-5,6,7,8-tetrahydrofolate. An N6-(pyridoxal phosphate)lysine modification is found at lysine 229. 355–357 (SPF) provides a ligand contact to (6S)-5,6,7,8-tetrahydrofolate.

The protein belongs to the SHMT family. As to quaternary structure, homodimer. Pyridoxal 5'-phosphate serves as cofactor.

The protein localises to the cytoplasm. It catalyses the reaction (6R)-5,10-methylene-5,6,7,8-tetrahydrofolate + glycine + H2O = (6S)-5,6,7,8-tetrahydrofolate + L-serine. It functions in the pathway one-carbon metabolism; tetrahydrofolate interconversion. It participates in amino-acid biosynthesis; glycine biosynthesis; glycine from L-serine: step 1/1. Its function is as follows. Catalyzes the reversible interconversion of serine and glycine with tetrahydrofolate (THF) serving as the one-carbon carrier. This reaction serves as the major source of one-carbon groups required for the biosynthesis of purines, thymidylate, methionine, and other important biomolecules. Also exhibits THF-independent aldolase activity toward beta-hydroxyamino acids, producing glycine and aldehydes, via a retro-aldol mechanism. In Klebsiella pneumoniae (strain 342), this protein is Serine hydroxymethyltransferase.